A 361-amino-acid polypeptide reads, in one-letter code: 5-formaminoimidazole-4-carboxamide-1-(beta)-D-ribofuranosyl 5'-monophosphate synthetase (361 aa).

5-amino-1-(5-phospho-beta-D-ribosyl)imidazole-4-carboxamide is bound by residues His-27 and Ser-94. Residues 116–348 (RAILRWEAER…MGQRIAKEIK (233 aa)) form the ATP-grasp domain. ATP-binding positions include 146–208 (PDEI…ANYC) and Glu-230. A 5-amino-1-(5-phospho-beta-D-ribosyl)imidazole-4-carboxamide-binding site is contributed by Asn-258. Mg(2+)-binding residues include Gln-297 and Glu-310.

The protein belongs to the phosphohexose mutase family. It depends on Mg(2+) as a cofactor. The cofactor is Mn(2+).

The enzyme catalyses 5-amino-1-(5-phospho-beta-D-ribosyl)imidazole-4-carboxamide + formate + ATP = 5-formamido-1-(5-phospho-D-ribosyl)imidazole-4-carboxamide + ADP + phosphate. It functions in the pathway purine metabolism; IMP biosynthesis via de novo pathway; 5-formamido-1-(5-phospho-D-ribosyl)imidazole-4-carboxamide from 5-amino-1-(5-phospho-D-ribosyl)imidazole-4-carboxamide (formate route): step 1/1. Its function is as follows. Catalyzes the ATP- and formate-dependent formylation of 5-aminoimidazole-4-carboxamide-1-beta-d-ribofuranosyl 5'-monophosphate (AICAR) to 5-formaminoimidazole-4-carboxamide-1-beta-d-ribofuranosyl 5'-monophosphate (FAICAR) in the absence of folates. In Methanococcus vannielii (strain ATCC 35089 / DSM 1224 / JCM 13029 / OCM 148 / SB), this protein is 5-formaminoimidazole-4-carboxamide-1-(beta)-D-ribofuranosyl 5'-monophosphate synthetase.